Consider the following 348-residue polypeptide: Cylicin-2 (348 aa).

The segment at Lys-25–Gly-347 is 31 X 3 AA repeats of K-K-X. Disordered regions lie at residues Leu-35–Val-59 and Pro-101–Lys-348. Basic and acidic residues-rich tracts occupy residues Arg-103 to Lys-159, Lys-166 to Ser-217, Lys-238 to Ile-267, and Lys-276 to Asp-342. A run of 3 repeats spans residues Ala-157 to Gly-184, Ala-185 to Gly-212, and Thr-213 to Asp-240. Positions Ala-157–Asp-240 are 3 X approximate tandem repeats.

In terms of tissue distribution, testis.

It is found in the cytoplasm. The protein resides in the cytoskeleton. It localises to the perinuclear theca. Its subcellular location is the calyx. Plays a role in the establishment of normal sperm morphology during spermatogenesis. It is required for acrosome attachment to the nuclear envelope, and proper manchette elongation and disassembly. This is Cylicin-2 (CYLC2) from Homo sapiens (Human).